A 164-amino-acid chain; its full sequence is FMN reductase (NADH) RutF (164 aa).

The protein belongs to the non-flavoprotein flavin reductase family. RutF subfamily.

It catalyses the reaction FMNH2 + NAD(+) = FMN + NADH + 2 H(+). In terms of biological role, catalyzes the reduction of FMN to FMNH2 which is used to reduce pyrimidine by RutA via the Rut pathway. The protein is FMN reductase (NADH) RutF of Enterobacter cloacae subsp. cloacae (strain ATCC 13047 / DSM 30054 / NBRC 13535 / NCTC 10005 / WDCM 00083 / NCDC 279-56).